A 435-amino-acid chain; its full sequence is Xylose isomerase (435 aa).

Residues H100 and D103 contribute to the active site. Mg(2+) is bound by residues E231, E267, H270, D295, D306, D308, and D338.

Belongs to the xylose isomerase family. Homotetramer. Requires Mg(2+) as cofactor.

The protein localises to the cytoplasm. It carries out the reaction alpha-D-xylose = alpha-D-xylulofuranose. The polypeptide is Xylose isomerase (Brucella ovis (strain ATCC 25840 / 63/290 / NCTC 10512)).